The chain runs to 526 residues: MGSSKSKPKDPSQRRCSLEPPDSTHHGGFPASQTPNKTAAPDTHRTPSRSFGTVATEPKLFGGFNTSDTVTSPQRAGALAGGVTTFVALYDYESRTETDLSFKKGERLQIVNNTEGDWWLAHSLTTGQTGYIPSNYVAPSDSIQAEEWYFGKITRRESERLLLNPENPRGTFLVRESETTKGAYCLSVSDFDNAKGLNVKHYKIRKLDSGGFYITSRTQFSSLQQLVAYYSKHADGLCHRLTNVCPTSKPQTQGLAKDAWEIPRESLRLEVKLGQGCFGEVWMGTWNGTTRVAIKTLKPGTMSPEAFLQEAQVMKKLRHEKLVQLYAVVSEEPIYIVTEYMSKGSLLDFLKGEMGKYLRLPQLVDMAAQIASGMAYVERMNYVHRDLRAANILVGENLVCKVADFGLARLIEDNEYTARQGAKFPIKWTAPEAALYGRFTIKSDVWSFGILLTELTTKGRVPYPGMGNGEVLDRVERGYRMPCPPECPESLHDLMCQCWRRDPEERPTFEYLQAQLLPACVLEVAE.

The segment at 1 to 57 is disordered; that stretch reads MGSSKSKPKDPSQRRCSLEPPDSTHHGGFPASQTPNKTAAPDTHRTPSRSFGTVATE. Gly-2 is lipidated: N-myristoyl glycine; by host. The span at 7–25 shows a compositional bias: basic and acidic residues; that stretch reads KPKDPSQRRCSLEPPDSTH. One can recognise an SH3 domain in the interval 81-142; it reads GGVTTFVALY…PSNYVAPSDS (62 aa). An SH2 domain is found at 148–245; sequence WYFGKITRRE…GLCHRLTNVC (98 aa). A Protein kinase domain is found at 267 to 517; that stretch reads LRLEVKLGQG…TFEYLQAQLL (251 aa). ATP contacts are provided by residues 273–281 and Lys-295; that span reads LGQGCFGEV. Asp-386 functions as the Proton acceptor in the catalytic mechanism. Position 416 is a phosphotyrosine; by autocatalysis (Tyr-416).

It belongs to the protein kinase superfamily. Tyr protein kinase family. SRC subfamily. Post-translationally, the phosphorylated form is termed pp60v-src.

It catalyses the reaction L-tyrosyl-[protein] + ATP = O-phospho-L-tyrosyl-[protein] + ADP + H(+). Its function is as follows. This phosphoprotein, required for both the initiation and the maintenance of neoplastic transformation, is a protein kinase that catalyzes the phosphorylation of tyrosine residues in vitro. The chain is Tyrosine-protein kinase transforming protein Src (V-SRC) from Galliformes.